Consider the following 529-residue polypeptide: Potassium voltage-gated channel subfamily A member 6 (529 aa).

The interval 1–35 (MRSEKSLTLAAPGEVRGPEGEQQDAGEFQEAEGGG) is disordered. At 1–171 (MRSEKSLTLA…LLFEYPESSG (171 aa)) the chain is on the cytoplasmic side. A Phosphoserine modification is found at Ser-3. Over residues 21 to 30 (EQQDAGEFQE) the composition is skewed to acidic residues. A helical membrane pass occupies residues 172–193 (PARGIAIVSVLVILISIVIFCL). Topologically, residues 194 to 262 (ETLPQFRADG…TLGGSFFTDP (69 aa)) are extracellular. Residues 203–238 (GRGGSNEGSGTRLSPASRSHEEEDEDEDSYAFPGSI) form a disordered region. Over residues 210–219 (GSGTRLSPAS) the composition is skewed to polar residues. Residues 263-284 (FFLVETLCIVWFTFELLVRFSA) form a helical membrane-spanning segment. Cys-285 is lipidated: S-palmitoyl cysteine. Residues 285 to 295 (CPSKAAFFRNI) lie on the Cytoplasmic side of the membrane. Residues 296 to 316 (MNIIDLVAIFPYFITLGTELV) traverse the membrane as a helical segment. Residues 317–337 (QRHEQQSVSGGSGQNGQQAMS) lie on the Extracellular side of the membrane. A helical; Voltage-sensor transmembrane segment spans residues 338-358 (LAILRVIRLVRVFRIFKLSRH). Residues 359–373 (SKGLQILGKTLQASM) lie on the Cytoplasmic side of the membrane. The tract at residues 360–373 (KGLQILGKTLQASM) is S4-S5 linker. The helical transmembrane segment at 374-395 (RELGLLIFFLFIGVILFSSAVY) threads the bilayer. Residues 396–409 (FAEADDVDSLFPSI) are Extracellular-facing. Residues 410–421 (PDAFWWAVVTMT) constitute an intramembrane region (helical). A Selectivity filter motif is present at residues 422 to 427 (TVGYGD). Residues 422-429 (TVGYGDMY) lie within the membrane without spanning it. The Extracellular portion of the chain corresponds to 430–436 (PMTVGGK). A helical transmembrane segment spans residues 437–465 (IVGSLCAIAGVLTIALPVPVIVSNFNYFY). Topologically, residues 466-529 (HRETEQEEQG…YAEKRMLTEV (64 aa)) are cytoplasmic. The segment at 488–513 (DLKATDNGLGKPDFAEASRERRPSYL) is disordered. Basic and acidic residues predominate over residues 500 to 510 (DFAEASRERRP). Phosphoserine; by PKA is present on Ser-511. The PDZ-binding signature appears at 527-529 (TEV).

Belongs to the potassium channel family. A (Shaker) (TC 1.A.1.2) subfamily. Kv1.6/KCNA6 sub-subfamily. In terms of assembly, homotetramer and heterotetramer of potassium channel proteins. Interacts with KCNAB1 and KCNAB2.

The protein localises to the cell membrane. It catalyses the reaction K(+)(in) = K(+)(out). Functionally, voltage-gated potassium channel that mediates transmembrane potassium transport in excitable membranes. Forms tetrameric potassium-selective channels through which potassium ions pass in accordance with their electrochemical gradient. The channel alternates between opened and closed conformations in response to the voltage difference across the membrane. Can form functional homotetrameric channels and heterotetrameric channels that contain variable proportions of KCNA1, KCNA2, KCNA4, KCNA6, and possibly other family members as well; channel properties depend on the type of alpha subunits that are part of the channel. Channel properties are modulated by cytoplasmic beta subunits that regulate the subcellular location of the alpha subunits and promote rapid inactivation. Homotetrameric channels display rapid activation and slow inactivation. This is Potassium voltage-gated channel subfamily A member 6 (Kcna6) from Mus musculus (Mouse).